A 1171-amino-acid polypeptide reads, in one-letter code: Pesticidal crystal protein Cry1Ea (1171 aa).

The tract at residues 1094 to 1124 (ESNSSVHASVYEEKSYTDRRRENPCESNRGY) is disordered. Residues 1103-1117 (VYEEKSYTDRRRENP) show a composition bias toward basic and acidic residues.

Belongs to the delta endotoxin family.

Its function is as follows. Promotes colloidosmotic lysis by binding to the midgut epithelial cells of many lepidopteran larvae including Spodoptera species. The sequence is that of Pesticidal crystal protein Cry1Ea (cry1Ea) from Bacillus thuringiensis subsp. kenyae.